Consider the following 435-residue polypeptide: Cyclin-J-like protein (435 aa).

The region spanning 14–191 is the Cyclin N-terminal domain; the sequence is DVHCTLREKE…LLEAFSWNLC (178 aa). Positions 120-142 are disordered; it reads SSNSPASAPHPPPTPPQVAETTG.

Belongs to the cyclin family. Cyclin J subfamily.

In Homo sapiens (Human), this protein is Cyclin-J-like protein (CCNJL).